A 212-amino-acid polypeptide reads, in one-letter code: Large ribosomal subunit protein uL3 (212 aa).

The interval glycine 147–glycine 166 is disordered. The residue at position 153 (glutamine 153) is an N5-methylglutamine.

The protein belongs to the universal ribosomal protein uL3 family. As to quaternary structure, part of the 50S ribosomal subunit. Forms a cluster with proteins L14 and L19. Methylated by PrmB.

In terms of biological role, one of the primary rRNA binding proteins, it binds directly near the 3'-end of the 23S rRNA, where it nucleates assembly of the 50S subunit. The protein is Large ribosomal subunit protein uL3 of Psychrobacter sp. (strain PRwf-1).